Consider the following 190-residue polypeptide: Guanylate kinase (190 aa).

The region spanning 8-188 (GRLVILAGPS…AVKAIEDVLL (181 aa)) is the Guanylate kinase-like domain. 15–22 (GPSAVGKS) serves as a coordination point for ATP.

Belongs to the guanylate kinase family.

It localises to the cytoplasm. The catalysed reaction is GMP + ATP = GDP + ADP. Functionally, essential for recycling GMP and indirectly, cGMP. The sequence is that of Guanylate kinase from Corynebacterium glutamicum (strain ATCC 13032 / DSM 20300 / JCM 1318 / BCRC 11384 / CCUG 27702 / LMG 3730 / NBRC 12168 / NCIMB 10025 / NRRL B-2784 / 534).